The primary structure comprises 217 residues: GrpE protein homolog 1, mitochondrial (217 aa).

The N-terminal 27 residues, 1 to 27 (MAARCVRLARRSLPALALSFRPSPRLL), are a transit peptide targeting the mitochondrion. The residue at position 94 (Lys-94) is an N6-acetyllysine; alternate. Position 94 is an N6-succinyllysine; alternate (Lys-94). Lys-100 carries the N6-acetyllysine modification. Lys-120 carries the post-translational modification N6-succinyllysine. Lys-215 is subject to N6-acetyllysine; alternate. Lys-215 carries the post-translational modification N6-succinyllysine; alternate.

The protein belongs to the GrpE family. In terms of assembly, probable component of the PAM complex at least composed of a mitochondrial HSP70 protein, GRPEL1 or GRPEL2, TIMM44, TIMM16/PAM16 and TIMM14/DNAJC19. Binds to HSP70, HSC70 and HSJ1B. As to expression, ubiquitous. Particularly abundant in heart, kidney and liver.

Its subcellular location is the mitochondrion matrix. Its function is as follows. Essential component of the PAM complex, a complex required for the translocation of transit peptide-containing proteins from the inner membrane into the mitochondrial matrix in an ATP-dependent manner. Seems to control the nucleotide-dependent binding of mitochondrial HSP70 to substrate proteins. The polypeptide is GrpE protein homolog 1, mitochondrial (Grpel1) (Rattus norvegicus (Rat)).